A 494-amino-acid chain; its full sequence is Anaerobic nitric oxide reductase flavorubredoxin (494 aa).

The zinc metallo-hydrolase stretch occupies residues 30-210 (TKGTSYNSYL…PFSALVTAKI (181 aa)). Residues His79, Glu81, Asp83, His147, Asp166, and His227 each coordinate Fe cation. The Flavodoxin-like domain maps to 254-393 (ITIFYDSMSN…ECREHGQQIA (140 aa)). Residues 260 to 264 (SMSNN) and 342 to 369 (AFGSYGWNGGAVDRIHARLTDAGFETAI) each bind FMN. Positions 441–492 (CQCMVCTVCNWVYDPAKGEPNQGIEVGTTWADVPDYFLCPECHLGKDVFVEY) constitute a Rubredoxin-like domain. 4 residues coordinate Fe cation: Cys446, Cys449, Cys479, and Cys482.

The protein in the N-terminal section; belongs to the zinc metallo-hydrolase group 3 family. As to quaternary structure, homotetramer. Fe cation is required as a cofactor. Requires FMN as cofactor.

It localises to the cytoplasm. It participates in nitrogen metabolism; nitric oxide reduction. Anaerobic nitric oxide reductase; uses NADH to detoxify nitric oxide (NO), protecting several 4Fe-4S NO-sensitive enzymes. Has at least 2 reductase partners, only one of which (NorW, flavorubredoxin reductase) has been identified. NO probably binds to the di-iron center; electrons enter from the NorW at rubredoxin and are transferred sequentially to the FMN center and the di-iron center. Also able to function as an aerobic oxygen reductase. This chain is Anaerobic nitric oxide reductase flavorubredoxin, found in Vibrio vulnificus (strain YJ016).